The sequence spans 179 residues: Gut granule loss protein 3 (179 aa).

Residues 40-59 form a disordered region; that stretch reads DLDSASSGVGSSTCTEEQES. Residues 42-54 show a composition bias toward polar residues; it reads DSASSGVGSSTCT.

The chain is Gut granule loss protein 3 (glo-3) from Caenorhabditis elegans.